The sequence spans 127 residues: Fluoride-specific ion channel FluC (127 aa).

The next 4 helical transmembrane spans lie at 7 to 27 (VYVA…VAWV), 38 to 58 (GTLA…VYVV), 70 to 90 (LIMV…LEAW), and 102 to 122 (LAYI…GIAL). Glycine 77 and threonine 80 together coordinate Na(+).

Belongs to the fluoride channel Fluc/FEX (TC 1.A.43) family.

The protein localises to the cell inner membrane. The enzyme catalyses fluoride(in) = fluoride(out). Its activity is regulated as follows. Na(+) is not transported, but it plays an essential structural role and its presence is essential for fluoride channel function. Its function is as follows. Fluoride-specific ion channel. Important for reducing fluoride concentration in the cell, thus reducing its toxicity. The protein is Fluoride-specific ion channel FluC of Hahella chejuensis (strain KCTC 2396).